Reading from the N-terminus, the 111-residue chain is T cell receptor beta variable 30 (111 aa).

The N-terminal stretch at 1 to 18 (MLCSLLALLLGTFFGVRS) is a signal peptide. In terms of domain architecture, Ig-like spans 19 to 111 (QTIHQWPATL…DSGFYLCAWS (93 aa)). Residues Cys40 and Cys108 are joined by a disulfide bond. Asn80 carries an N-linked (GlcNAc...) asparagine glycan.

As to quaternary structure, alpha-beta TR is a heterodimer composed of an alpha and beta chain; disulfide-linked. The alpha-beta TR is associated with the transmembrane signaling CD3 coreceptor proteins to form the TR-CD3 (TcR or TCR). The assembly of alpha-beta TR heterodimers with CD3 occurs in the endoplasmic reticulum where a single alpha-beta TR heterodimer associates with one CD3D-CD3E heterodimer, one CD3G-CD3E heterodimer and one CD247 homodimer forming a stable octameric structure. CD3D-CD3E and CD3G-CD3E heterodimers preferentially associate with TR alpha and TR beta chains, respectively. The association of the CD247 homodimer is the last step of TcR assembly in the endoplasmic reticulum and is required for transport to the cell surface.

It is found in the cell membrane. Its function is as follows. V region of the variable domain of T cell receptor (TR) beta chain that participates in the antigen recognition. Alpha-beta T cell receptors are antigen specific receptors which are essential to the immune response and are present on the cell surface of T lymphocytes. Recognize peptide-major histocompatibility (MH) (pMH) complexes that are displayed by antigen presenting cells (APC), a prerequisite for efficient T cell adaptive immunity against pathogens. Binding of alpha-beta TR to pMH complex initiates TR-CD3 clustering on the cell surface and intracellular activation of LCK that phosphorylates the ITAM motifs of CD3G, CD3D, CD3E and CD247 enabling the recruitment of ZAP70. In turn ZAP70 phosphorylates LAT, which recruits numerous signaling molecules to form the LAT signalosome. The LAT signalosome propagates signal branching to three major signaling pathways, the calcium, the mitogen-activated protein kinase (MAPK) kinase and the nuclear factor NF-kappa-B (NF-kB) pathways, leading to the mobilization of transcription factors that are critical for gene expression and essential for T cell growth and differentiation. The T cell repertoire is generated in the thymus, by V-(D)-J rearrangement. This repertoire is then shaped by intrathymic selection events to generate a peripheral T cell pool of self-MH restricted, non-autoaggressive T cells. Post-thymic interaction of alpha-beta TR with the pMH complexes shapes TR structural and functional avidity. The sequence is that of T cell receptor beta variable 30 from Homo sapiens (Human).